The following is a 309-amino-acid chain: Probable MRF1 mitochondrial N(5)-glutamine methyltransferase mtq1 (309 aa).

Residues 124–128, Asp148, and Asn200 contribute to the S-adenosyl-L-methionine site; that span reads CTGSG. 200–203 is a substrate binding site; that stretch reads NPPY.

Belongs to the protein N5-glutamine methyltransferase family.

The protein resides in the mitochondrion. The enzyme catalyses L-glutaminyl-[peptide chain release factor] + S-adenosyl-L-methionine = N(5)-methyl-L-glutaminyl-[peptide chain release factor] + S-adenosyl-L-homocysteine + H(+). Methylates MRF1 on 'Gln-270' using S-adenosyl L-methionine as methyl donor. The polypeptide is Probable MRF1 mitochondrial N(5)-glutamine methyltransferase mtq1 (mtq1) (Schizosaccharomyces pombe (strain 972 / ATCC 24843) (Fission yeast)).